Consider the following 454-residue polypeptide: uncharacterized protein (454 aa).

An HNH domain is found at 364-405 (CSRPGCDAPAYHSEVHHVTPWTTTHRTDINDLTLACGPDNRL).

It belongs to the Rv1128c/1148c/1588c/1702c/1945/3466 family.

This is an uncharacterized protein from Mycobacterium tuberculosis (strain CDC 1551 / Oshkosh).